A 227-amino-acid chain; its full sequence is PKHD-type hydroxylase Bphyt_7102 (227 aa).

In terms of domain architecture, Fe2OG dioxygenase spans 80–179; the sequence is QVYPPLFNRY…RIASFFWVQS (100 aa). Residues histidine 98, aspartate 100, and histidine 160 each contribute to the Fe cation site. Arginine 170 serves as a coordination point for 2-oxoglutarate.

Requires Fe(2+) as cofactor. The cofactor is L-ascorbate.

In Paraburkholderia phytofirmans (strain DSM 17436 / LMG 22146 / PsJN) (Burkholderia phytofirmans), this protein is PKHD-type hydroxylase Bphyt_7102.